Consider the following 437-residue polypeptide: Phosphatidylserine decarboxylase proenzyme 1, mitochondrial (437 aa).

The N-terminal 18 residues, Met1 to Tyr18, are a transit peptide targeting the mitochondrion. Over Ser19–Gly38 the chain is Mitochondrial matrix. The chain crosses the membrane as a helical span at residues Leu39–His57. At Glu58–His437 the chain is on the mitochondrial intermembrane side. Active-site charge relay system; for autoendoproteolytic cleavage activity residues include Asp157, His287, and Ser401. Ser401 (schiff-base intermediate with substrate; via pyruvic acid; for decarboxylase activity) is an active-site residue. Position 401 is a pyruvic acid (Ser); by autocatalysis (Ser401).

The protein belongs to the phosphatidylserine decarboxylase family. PSD-B subfamily. Eukaryotic type I sub-subfamily. As to quaternary structure, heterodimer of a large membrane-associated beta subunit and a small pyruvoyl-containing alpha subunit. Requires pyruvate as cofactor. Post-translationally, is synthesized initially as an inactive proenzyme. Formation of the active enzyme involves a self-maturation process in which the active site pyruvoyl group is generated from an internal serine residue via an autocatalytic post-translational modification. Two non-identical subunits are generated from the proenzyme in this reaction, and the pyruvate is formed at the N-terminus of the alpha chain, which is derived from the carboxyl end of the proenzyme. The autoendoproteolytic cleavage occurs by a canonical serine protease mechanism, in which the side chain hydroxyl group of the serine supplies its oxygen atom to form the C-terminus of the beta chain, while the remainder of the serine residue undergoes an oxidative deamination to produce ammonia and the pyruvoyl prosthetic group on the alpha chain. During this reaction, the Ser that is part of the protease active site of the proenzyme becomes the pyruvoyl prosthetic group, which constitutes an essential element of the active site of the mature decarboxylase.

Its subcellular location is the mitochondrion. The protein localises to the mitochondrion inner membrane. The catalysed reaction is a 1,2-diacyl-sn-glycero-3-phospho-L-serine + H(+) = a 1,2-diacyl-sn-glycero-3-phosphoethanolamine + CO2. It functions in the pathway phospholipid metabolism; phosphatidylethanolamine biosynthesis; phosphatidylethanolamine from CDP-diacylglycerol: step 2/2. Its function is as follows. Catalyzes the formation of phosphatidylethanolamine (PtdEtn) from phosphatidylserine (PtdSer). Plays a central role in phospholipid metabolism and in the interorganelle trafficking of phosphatidylserine. Together with psd2 and psd3, responsible for the majority of phosphatidylethanolamine synthesis. This chain is Phosphatidylserine decarboxylase proenzyme 1, mitochondrial, found in Schizosaccharomyces pombe (strain 972 / ATCC 24843) (Fission yeast).